The following is an 85-amino-acid chain: Toxin BmKa3 (85 aa).

A signal peptide spans 1 to 19 (MNYLVFFSLALLLMTGVES). Residues 21–83 (RDGYIADDKN…VPIRVPGKCN (63 aa)) form the LCN-type CS-alpha/beta domain. Cystine bridges form between C31–C82, C35–C55, C41–C65, and C45–C67.

The protein belongs to the long (4 C-C) scorpion toxin superfamily. Sodium channel inhibitor family. Alpha subfamily. As to expression, expressed by the venom gland.

The protein localises to the secreted. Alpha toxins bind voltage-independently at site-3 of sodium channels (Nav) and inhibit the inactivation of the activated channels, thereby blocking neuronal transmission. This is Toxin BmKa3 from Olivierus martensii (Manchurian scorpion).